The primary structure comprises 198 residues: Imidazole glycerol phosphate synthase subunit HisH (198 aa).

The Glutamine amidotransferase type-1 domain occupies 1–194 (MIAIIDYGLG…LKGGFQDDQT (194 aa)). The active-site Nucleophile is the Cys77. Active-site residues include His169 and Glu171.

Heterodimer of HisH and HisF.

It is found in the cytoplasm. It catalyses the reaction 5-[(5-phospho-1-deoxy-D-ribulos-1-ylimino)methylamino]-1-(5-phospho-beta-D-ribosyl)imidazole-4-carboxamide + L-glutamine = D-erythro-1-(imidazol-4-yl)glycerol 3-phosphate + 5-amino-1-(5-phospho-beta-D-ribosyl)imidazole-4-carboxamide + L-glutamate + H(+). The enzyme catalyses L-glutamine + H2O = L-glutamate + NH4(+). The protein operates within amino-acid biosynthesis; L-histidine biosynthesis; L-histidine from 5-phospho-alpha-D-ribose 1-diphosphate: step 5/9. Functionally, IGPS catalyzes the conversion of PRFAR and glutamine to IGP, AICAR and glutamate. The HisH subunit catalyzes the hydrolysis of glutamine to glutamate and ammonia as part of the synthesis of IGP and AICAR. The resulting ammonia molecule is channeled to the active site of HisF. The chain is Imidazole glycerol phosphate synthase subunit HisH from Staphylococcus saprophyticus subsp. saprophyticus (strain ATCC 15305 / DSM 20229 / NCIMB 8711 / NCTC 7292 / S-41).